The following is a 286-amino-acid chain: Putative sugar uptake protein lmo0176 (286 aa).

Transmembrane regions (helical) follow at residues 4–26, 33–55, 114–136, 149–167, 177–194, 207–226, 230–252, and 264–283; these read MIAL…FGGS, GMTL…VYTL, LRII…TSYA, GLIT…VVLI, AILP…IMTH, LLLT…MVHA, VGVA…GGII, and LFVI…IGVA.

Belongs to the GRP transporter (TC 2.A.7.5) family.

It localises to the cell membrane. In Listeria monocytogenes serovar 1/2a (strain ATCC BAA-679 / EGD-e), this protein is Putative sugar uptake protein lmo0176.